Consider the following 155-residue polypeptide: Ribosome maturation factor RimP (155 aa).

Belongs to the RimP family.

It is found in the cytoplasm. Required for maturation of 30S ribosomal subunits. The polypeptide is Ribosome maturation factor RimP (Listeria monocytogenes serotype 4a (strain HCC23)).